The primary structure comprises 515 residues: Bifunctional purine biosynthesis protein PurH (515 aa).

The region spanning 1–145 (MTKRALISVS…KNHASVTVVV (145 aa)) is the MGS-like domain.

The protein belongs to the PurH family.

It carries out the reaction (6R)-10-formyltetrahydrofolate + 5-amino-1-(5-phospho-beta-D-ribosyl)imidazole-4-carboxamide = 5-formamido-1-(5-phospho-D-ribosyl)imidazole-4-carboxamide + (6S)-5,6,7,8-tetrahydrofolate. It catalyses the reaction IMP + H2O = 5-formamido-1-(5-phospho-D-ribosyl)imidazole-4-carboxamide. Its pathway is purine metabolism; IMP biosynthesis via de novo pathway; 5-formamido-1-(5-phospho-D-ribosyl)imidazole-4-carboxamide from 5-amino-1-(5-phospho-D-ribosyl)imidazole-4-carboxamide (10-formyl THF route): step 1/1. The protein operates within purine metabolism; IMP biosynthesis via de novo pathway; IMP from 5-formamido-1-(5-phospho-D-ribosyl)imidazole-4-carboxamide: step 1/1. In Streptococcus equi subsp. equi (strain 4047), this protein is Bifunctional purine biosynthesis protein PurH.